The following is a 207-amino-acid chain: MGKGTLYIVSAPSGAGKSSLISAMLERNPTYAMKVSVSHTTRNMRPGEEDGVHYHFVAKEEFETLIAKGDFLEYAEVFGNYYGTSRVWIEETLEKGIDVFLDIDWQGARQIREQMPKAKSIFILPPSNGELERRLNTRGQDSAEVIAKRMAEAKSEISHYSEYDYVIVNDDFDTALMDFKAILRAERLKEEKQAAKYKGMLDALLAE.

The Guanylate kinase-like domain maps to 4 to 184 (GTLYIVSAPS…ALMDFKAILR (181 aa)). Position 11–18 (11–18 (APSGAGKS)) interacts with ATP.

The protein belongs to the guanylate kinase family.

It is found in the cytoplasm. It carries out the reaction GMP + ATP = GDP + ADP. Functionally, essential for recycling GMP and indirectly, cGMP. This Vibrio parahaemolyticus serotype O3:K6 (strain RIMD 2210633) protein is Guanylate kinase.